A 119-amino-acid polypeptide reads, in one-letter code: Large ribosomal subunit protein uL18 (119 aa).

This sequence belongs to the universal ribosomal protein uL18 family. As to quaternary structure, part of the 50S ribosomal subunit; part of the 5S rRNA/L5/L18/L25 subcomplex. Contacts the 5S and 23S rRNAs.

In terms of biological role, this is one of the proteins that bind and probably mediate the attachment of the 5S RNA into the large ribosomal subunit, where it forms part of the central protuberance. In Borrelia hermsii (strain HS1 / DAH), this protein is Large ribosomal subunit protein uL18.